The following is a 293-amino-acid chain: Heterogeneous nuclear ribonucleoprotein C-like 4 (293 aa).

The RRM domain maps to 16-87 (SRVFIGNLNT…QVVDINLAAE (72 aa)). 2 disordered regions span residues 140–177 (VVPSKRQRISGNTSRRGKSGFNSKSGKRGSSKSGKLKG) and 208–293 (HCKQ…QDDS). A coiled-coil region spans residues 177–208 (GDDLQAIKQELTQIKQKVDSLLENLEKIEKEH). Composition is skewed to basic and acidic residues over residues 208–222 (HCKQGVEVKNAKSEE) and 229–240 (SKKDKTHVKMES). The span at 242–263 (GGADDSVEEGDLLCDDDNEDQG) shows a compositional bias: acidic residues. Basic and acidic residues predominate over residues 269 to 293 (LIKDDEKGAEEGEDDRDRANGQDDS).

Belongs to the RRM HNRPC family. RALY subfamily.

Its subcellular location is the nucleus. In Homo sapiens (Human), this protein is Heterogeneous nuclear ribonucleoprotein C-like 4.